The sequence spans 332 residues: Solute carrier family 25 member 16 (332 aa).

Solcar repeat units lie at residues 34–120 (FYWL…YKTL), 128–216 (SGHV…LKSV), and 238–328 (LKTH…MKQF). The next 6 helical transmembrane spans lie at 37 to 57 (LRSF…VAPL), 88 to 108 (GFLG…PYGA), 134 to 154 (LMAG…LDMV), 191 to 211 (GLMP…FTFG), 244 to 264 (LLCG…FDVT), and 299 to 319 (GLYR…AVAF).

The protein belongs to the mitochondrial carrier (TC 2.A.29) family.

The protein localises to the mitochondrion inner membrane. Functionally, may be involved in the transport of coenzyme A in the mitochondrial matrix. Very little is known about the physiological function of this carrier. The sequence is that of Solute carrier family 25 member 16 from Homo sapiens (Human).